The following is a 283-amino-acid chain: Accumulation of dyads protein 2 (283 aa).

The tract at residues 1–41 (MSDKEQTSGNTDLENAPAGYYSSHDNDVNGVAEDERPSHDS) is disordered. Topologically, residues 1–89 (MSDKEQTSGN…APAPVHKFAN (89 aa)) are cytoplasmic. Residues 90-110 (PAPLGLSAFALTTFVLSMFNA) form a helical membrane-spanning segment. At 111-120 (RAQGITVPNV) the chain is on the extracellular side. The helical transmembrane segment at 121-141 (VVGCAMFYGGLVQLIAGIWEI) threads the bilayer. Residues 142–151 (ALENTFGGTA) lie on the Cytoplasmic side of the membrane. Residues 152–172 (LCSYGGFWLSFAAIYIPWFGI) form a helical membrane-spanning segment. Topologically, residues 173 to 185 (LEAYEDNESDLNN) are extracellular. The helical transmembrane segment at 186–206 (ALGFYLLGWAIFTFGLTVCTM) threads the bilayer. The Cytoplasmic segment spans residues 207-208 (KS). A helical transmembrane segment spans residues 209 to 229 (TVMFFLLFFLLALTFLLLSIG). Residues 230–240 (HFANRLGVTRA) lie on the Extracellular side of the membrane. Residues 241-261 (GGVLGVVVAFIAWYNAYAGVA) traverse the membrane as a helical segment. Residues 262–283 (TKQNSYVLARPFPLPSTERVIF) are Cytoplasmic-facing.

This sequence belongs to the acetate uptake transporter (AceTr) (TC 2.A.96) family.

It localises to the cell membrane. The protein localises to the vacuole membrane. Functionally, transporter protein required for ammonia export and acetate uptake and resistance. Necessary for up-regulation and down-regulation of meiotic plaque (MP) component levels in a dependency on external acetate. Has a role in ascus formation. This is Accumulation of dyads protein 2 (ADY2) from Saccharomyces cerevisiae (strain ATCC 204508 / S288c) (Baker's yeast).